Here is a 259-residue protein sequence, read N- to C-terminus: uncharacterized protein (259 aa).

An N-terminal signal peptide occupies residues 1–28 (MNIKRRLKYLTSCLLVSAFFWINSSAWA). Helical transmembrane passes span 32–52 (EIPP…IYVA) and 191–211 (WGFL…GIFT).

Its subcellular location is the cell membrane. This is an uncharacterized protein from Coxiella burnetii (strain RSA 493 / Nine Mile phase I).